A 667-amino-acid chain; its full sequence is MSRKDLANAIRALSMDAVQKANSGHPGAPMGMADIAEVLWNDFLKHNPTDPTWYDRDRFILSNGHASMLLYSLLHLTGYDLPLEELKNFRQLHSKTPGHPEIGYTPGVETTTGPLGQGLANAVGLAIAERTLAAQFNQPDHEIVDHFTYVFMGDGCLMEGISHEVCSLAGTLGLGKLIGFYDHNGISIDGETEGWFTDDTAKRFEAYHWHVIHEIDGHDPQAVKEAILEAQSVKDKPSLIICRTVIGFGSPNKAGKEEAHGAPLGEEEVALARQKLGWHHPPFEIPKEIYHAWDAREKGEKAQQSWNEKFAAYKKAHPQLAEEFTRRMSGGLPKDWEKTTQKYINELQANPAKIATRKASQNTLNAYGPMLPELLGGSADLAPSNLTIWKGSVSLKEDPAGNYIHYGVREFGMTAIANGIAHHGGFVPYTATFLMFVEYARNAARMAALMKARQIMVYTHDSIGLGEDGPTHQAVEQLASLRLTPNFSTWRPCDQVEAAVGWKLAVERHNGPTALILSRQNLAQVERTPDQVKEIARGGYVLKDSGGKPDIILIATGSEMEITLQAAEKLAGEGRNVRVVSLPSTDIFDAQDEEYRESVLPSNVAARVAVEAGIADYWYKYVGLKGAIVGMTGYGESAPADKLFPFFGFTAENIVAKAHKVLGVKGA.

His25 is a substrate binding site. Thiamine diphosphate-binding positions include His65 and 113–115; that span reads GPL. Residue Asp154 coordinates Mg(2+). Positions 155 and 184 each coordinate thiamine diphosphate. Positions 184 and 186 each coordinate Mg(2+). His260 serves as a coordination point for substrate. Position 260 (His260) interacts with thiamine diphosphate. N6-acetyllysine is present on Lys342. Residues Arg357 and Ser384 each coordinate substrate. The active-site Proton donor is Glu410. Phe436 lines the thiamine diphosphate pocket. Residues His460, Asp468, and Arg519 each contribute to the substrate site.

Belongs to the transketolase family. Homodimer. Mg(2+) serves as cofactor. It depends on Ca(2+) as a cofactor. Requires Mn(2+) as cofactor. The cofactor is Co(2+). Thiamine diphosphate is required as a cofactor.

It carries out the reaction D-sedoheptulose 7-phosphate + D-glyceraldehyde 3-phosphate = aldehydo-D-ribose 5-phosphate + D-xylulose 5-phosphate. Functionally, catalyzes the reversible transfer of a two-carbon ketol group from sedoheptulose-7-phosphate to glyceraldehyde-3-phosphate, producing xylulose-5-phosphate and ribose-5-phosphate. Catalyzes the transfer of a two-carbon ketol group from a ketose donor to an aldose acceptor, via a covalent intermediate with the cofactor thiamine pyrophosphate. This Escherichia coli (strain K12) protein is Transketolase 2.